A 546-amino-acid polypeptide reads, in one-letter code: Major facilitator superfamily transporter MPN_077 (546 aa).

Helical transmembrane passes span 2-22 (WGLV…IDFI), 62-82 (WTIT…VVKF), 88-108 (VMIM…GSPL), 179-199 (AFFI…IAYA), 220-240 (FWGF…PGVG), 248-268 (VWVV…FAWF), 305-325 (LLAI…QTWF), 344-364 (PILL…LSPF), 377-397 (FIFT…ATLG), 401-421 (VVGF…GWSL), 442-462 (IIFG…DIIT), and 485-505 (IAAI…IIYL).

The protein belongs to the major facilitator superfamily.

The protein localises to the cell membrane. The sequence is that of Major facilitator superfamily transporter MPN_077 from Mycoplasma pneumoniae (strain ATCC 29342 / M129 / Subtype 1) (Mycoplasmoides pneumoniae).